Consider the following 157-residue polypeptide: UPF0225 protein Psyr_3863 (157 aa).

Belongs to the UPF0225 family.

This is UPF0225 protein Psyr_3863 from Pseudomonas syringae pv. syringae (strain B728a).